A 547-amino-acid chain; its full sequence is bZIP transcription factor 29 (547 aa).

3 disordered regions span residues 1–199, 244–312, and 333–356; these read MGDT…SGGE, NSSE…DIAP, and GDES…TNSV. Over residues 15–52 the composition is skewed to polar residues; the sequence is LHSSFGTTSSSIPKNPISQLDLNPNFIRSSAPQFSKPF. A compositionally biased stretch (pro residues) spans 63-73; the sequence is PSHPNLIPPTS. Polar residues predominate over residues 74 to 89; the sequence is PFSQIPTTRQPGSHNF. The segment covering 120–132 has biased composition (basic and acidic residues); sequence FRDHDVSMEDRDS. Over residues 134-157 the composition is skewed to polar residues; the sequence is VFNSNHSLPPSPFTRCNSTSSSSL. The segment covering 249–263 has biased composition (basic and acidic residues); the sequence is DDSKNGNENRDDMES. Over residues 264–275 the composition is skewed to polar residues; the sequence is SRASGTKTNGSD. Positions 279–294 are enriched in low complexity; the sequence is ESSSVNESANNNMNSS. The span at 344–356 shows a compositional bias: polar residues; that stretch reads GSMSRKVSPTNSV. The bZIP domain maps to 394–457; that stretch reads DPKRVKRILA…MGLTNQNNEL (64 aa). Positions 396 to 417 are basic motif; that stretch reads KRVKRILANRQSAARSKERKMR. Positions 416–469 form a coiled coil; it reads MRYIVELEHKVQTLQTEATTLSAQLTLLQRDMMGLTNQNNELKFRLQAMEQQAR. The segment at 422–457 is leucine-zipper; that stretch reads LEHKVQTLQTEATTLSAQLTLLQRDMMGLTNQNNEL. The span at 517–535 shows a compositional bias: low complexity; it reads QLRQQPQQMQQQSHQQNHQ. The segment at 517 to 547 is disordered; it reads QLRQQPQQMQQQSHQQNHQNGTMATKSESNE. Residues 536–547 are compositionally biased toward polar residues; it reads NGTMATKSESNE.

Forms homodimers. In terms of tissue distribution, expressed in roots, leaves and flowers. Expressed in the root tips, lateral root primordia, and guard cells of leaves, hypocotyls and anthers.

It localises to the cytoplasm. It is found in the nucleus. Transcription factor that acts as a repressor of reproductive development, meristem size and plant growth. Regulates meristem size, cell size and cell number during plant development. Binds to the promoters of the cell cycle regulators CYCB1-2 and SMR4, and genes involved in cell wall organization, such as XTH9, EXPA1 and EXPA3. Possesses transactivation activity in yeast. Possesses transactivation activity in plant protoplasts. Plays a role in abiotic stress response by binding to the 5'-CAGCTG-3' DNA sequence found in the promoters of MYB44 and TRX8. Plays a role in osmosensory response by binding to the 5'-AGCTGT/G-3' DNA sequence found in the promoters of the hypoosmolarity-responsive genes CYP707A1 and CYP707A3. Binds to the 5'-AGCTGT-3' DNA sequence found in the promoter of the ZAT1 gene in response to abiotic stresses, such as oxidative stress, high-light, osmotic shock, salt and heat stresses. The polypeptide is bZIP transcription factor 29 (Arabidopsis thaliana (Mouse-ear cress)).